The following is a 1465-amino-acid chain: Protein clueless (1465 aa).

The disordered stretch occupies residues 1–87; it reads MALEIDAKNA…SNGHSENGDA (87 aa). Positions 30–51 are enriched in low complexity; the sequence is HNNNNNAPAAGEKNLVNGSSAA. Residues 52 to 61 are compositionally biased toward basic residues; it reads TKKKGKKNRN. Position 273 is a phosphoserine (serine 273). The region spanning 427 to 669 is the Clu domain; it reads RAEDAFSSKL…RTFPPDVNFL (243 aa). A compositionally biased stretch (basic and acidic residues) spans 742–767; the sequence is AEKQEEPNEEQPEKTEEQPAEKEESK. Disordered stretches follow at residues 742 to 776 and 962 to 1021; these read AEKQ…TKSA and VSSD…SNSD. Basic residues predominate over residues 970–986; sequence KQPRNNSGKHNKHKAAK. Composition is skewed to low complexity over residues 987-1003 and 1010-1020; these read ASKP…ATAA and ATTSGATSSNS. TPR repeat units lie at residues 1114-1147, 1240-1273, and 1275-1308; these read AYNF…LNNV, ALID…NLKY, and GNKA…EKET. Residues 1428-1465 are disordered; the sequence is NNNDNASETEQPKDEASAAGTPTQLTNGSEESTATVSS. Polar residues predominate over residues 1447-1465; the sequence is GTPTQLTNGSEESTATVSS.

Belongs to the CLU family.

Its subcellular location is the cytoplasm. Its function is as follows. mRNA-binding protein involved in proper cytoplasmic distribution of mitochondria. The chain is Protein clueless from Drosophila virilis (Fruit fly).